A 249-amino-acid polypeptide reads, in one-letter code: Undecaprenyl-diphosphatase (249 aa).

The next 8 helical transmembrane spans lie at 11–31 (GLTE…TAIF), 35–55 (PDVG…LIFV), 80–100 (LVLS…FIES), 101–121 (VFSS…LMLL), 135–155 (IPYL…LPGI), 180–200 (FLMS…KVAF), 202–222 (TEQI…LYLV), and 226–246 (VIGG…FFVL).

The protein belongs to the UppP family.

The protein localises to the cell membrane. The catalysed reaction is di-trans,octa-cis-undecaprenyl diphosphate + H2O = di-trans,octa-cis-undecaprenyl phosphate + phosphate + H(+). In terms of biological role, catalyzes the dephosphorylation of undecaprenyl diphosphate (UPP). The polypeptide is Undecaprenyl-diphosphatase (Methanococcus maripaludis (strain C6 / ATCC BAA-1332)).